The primary structure comprises 158 residues: NADH-quinone oxidoreductase subunit B (158 aa).

Cysteine 37, cysteine 38, cysteine 102, and cysteine 132 together coordinate [4Fe-4S] cluster.

This sequence belongs to the complex I 20 kDa subunit family. As to quaternary structure, NDH-1 is composed of 14 different subunits. Subunits NuoB, C, D, E, F, and G constitute the peripheral sector of the complex. The cofactor is [4Fe-4S] cluster.

The protein resides in the cell inner membrane. The enzyme catalyses a quinone + NADH + 5 H(+)(in) = a quinol + NAD(+) + 4 H(+)(out). Functionally, NDH-1 shuttles electrons from NADH, via FMN and iron-sulfur (Fe-S) centers, to quinones in the respiratory chain. Couples the redox reaction to proton translocation (for every two electrons transferred, four hydrogen ions are translocated across the cytoplasmic membrane), and thus conserves the redox energy in a proton gradient. This Legionella pneumophila (strain Paris) protein is NADH-quinone oxidoreductase subunit B.